A 433-amino-acid polypeptide reads, in one-letter code: Probable mannan endo-1,4-beta-mannosidase F (433 aa).

The first 19 residues, 1–19, serve as a signal peptide directing secretion; sequence MKRQALTLIPLLGAAAAQS. The CBM1 domain occupies 20 to 53; the sequence is GPYGQCGGNDWSGATTCVSGYVCVYQNEWYSQCV. Positions 56 to 82 are thr-rich linker; that stretch reads TATSSSTTLTTTTSATTRTTTTTTSTT. The catalytic stretch occupies residues 83-433; it reads SVPSSTNFPS…TEHMERIAAR (351 aa). A glycan (N-linked (GlcNAc...) asparagine) is linked at asparagine 97. Residues tryptophan 142 and asparagine 255 each coordinate substrate. The Proton donor role is filled by glutamate 256. Substrate is bound at residue tyrosine 331. Catalysis depends on glutamate 364, which acts as the Nucleophile. Tryptophan 394 is a binding site for substrate.

The protein belongs to the glycosyl hydrolase 5 (cellulase A) family.

It is found in the secreted. It carries out the reaction Random hydrolysis of (1-&gt;4)-beta-D-mannosidic linkages in mannans, galactomannans and glucomannans.. Its function is as follows. Endo-1,4-mannanase, a crucial enzyme for depolymerization of seed galactomannans and wood galactoglucomannans. This chain is Probable mannan endo-1,4-beta-mannosidase F (manF), found in Emericella nidulans (strain FGSC A4 / ATCC 38163 / CBS 112.46 / NRRL 194 / M139) (Aspergillus nidulans).